The chain runs to 368 residues: D-alanine--D-alanine ligase (368 aa).

An ATP-grasp domain is found at 151 to 358 (KKLLAAEGLP…YGTLVSTLVD (208 aa)). 179-234 (KSRLHLPVFVKPARGGSSIGITRVAEWAALDDAIAHARLHDPKVIVESGIIGREVE) contacts ATP. The Mg(2+) site is built by aspartate 313, glutamate 325, and asparagine 327.

It belongs to the D-alanine--D-alanine ligase family. Mg(2+) is required as a cofactor. It depends on Mn(2+) as a cofactor.

It localises to the cytoplasm. The enzyme catalyses 2 D-alanine + ATP = D-alanyl-D-alanine + ADP + phosphate + H(+). It participates in cell wall biogenesis; peptidoglycan biosynthesis. In terms of biological role, cell wall formation. This chain is D-alanine--D-alanine ligase, found in Rhodococcus jostii (strain RHA1).